Reading from the N-terminus, the 430-residue chain is Dihydroorotase (430 aa).

Zn(2+)-binding residues include H61 and H63. Substrate is bound by residues 63 to 65 (HLR) and N95. Zn(2+) contacts are provided by D153, H180, and H233. N279 is a binding site for substrate. Residue D306 participates in Zn(2+) binding. Residue D306 is part of the active site. H310 contacts substrate.

The protein belongs to the metallo-dependent hydrolases superfamily. DHOase family. Class I DHOase subfamily. The cofactor is Zn(2+).

It carries out the reaction (S)-dihydroorotate + H2O = N-carbamoyl-L-aspartate + H(+). Its pathway is pyrimidine metabolism; UMP biosynthesis via de novo pathway; (S)-dihydroorotate from bicarbonate: step 3/3. In terms of biological role, catalyzes the reversible cyclization of carbamoyl aspartate to dihydroorotate. The protein is Dihydroorotase of Caldicellulosiruptor saccharolyticus (strain ATCC 43494 / DSM 8903 / Tp8T 6331).